Consider the following 360-residue polypeptide: Phospho-N-acetylmuramoyl-pentapeptide-transferase (360 aa).

10 helical membrane passes run 26–46 (AILG…KLIE), 74–94 (MGGL…GDLG), 97–117 (YVWV…IDDY), 134–154 (YILQ…TAAN), 168–188 (VMPQ…VGSS), 199–219 (GLAI…AYLS), 236–256 (SGEL…FLWF), 263–283 (VFMG…IAVL), 288–308 (ILLV…ILQV), and 338–358 (VIVR…ATLK).

Belongs to the glycosyltransferase 4 family. MraY subfamily. Requires Mg(2+) as cofactor.

Its subcellular location is the cell inner membrane. It carries out the reaction UDP-N-acetyl-alpha-D-muramoyl-L-alanyl-gamma-D-glutamyl-meso-2,6-diaminopimeloyl-D-alanyl-D-alanine + di-trans,octa-cis-undecaprenyl phosphate = di-trans,octa-cis-undecaprenyl diphospho-N-acetyl-alpha-D-muramoyl-L-alanyl-D-glutamyl-meso-2,6-diaminopimeloyl-D-alanyl-D-alanine + UMP. The protein operates within cell wall biogenesis; peptidoglycan biosynthesis. Catalyzes the initial step of the lipid cycle reactions in the biosynthesis of the cell wall peptidoglycan: transfers peptidoglycan precursor phospho-MurNAc-pentapeptide from UDP-MurNAc-pentapeptide onto the lipid carrier undecaprenyl phosphate, yielding undecaprenyl-pyrophosphoryl-MurNAc-pentapeptide, known as lipid I. This Shewanella oneidensis (strain ATCC 700550 / JCM 31522 / CIP 106686 / LMG 19005 / NCIMB 14063 / MR-1) protein is Phospho-N-acetylmuramoyl-pentapeptide-transferase.